The following is a 1194-amino-acid chain: Phosphatidylinositol-3,5-bisphosphate 3-phosphatase MTMR3 (1194 aa).

Ser4 is subject to Phosphoserine. In terms of domain architecture, Myotubularin phosphatase spans 151-572 (EHVTSRFKNE…RNLMLWSAVY (422 aa)). The a 1,2-diacyl-sn-glycero-3-phospho-(1D-myo-inositol-3,5-bisphosphate) site is built by Asn322, Asn347, and Ile348. Residues Asn322, Asn347, and Ile348 each coordinate a 1,2-diacyl-sn-glycero-3-phospho-(1D-myo-inositol-3-phosphate). The Phosphocysteine intermediate role is filled by Cys409. A 1,2-diacyl-sn-glycero-3-phospho-(1D-myo-inositol-3,5-bisphosphate) is bound by residues Ser410, Asp411, Gly412, Trp413, Asp414, Arg415, Lys451, and Arg455. Ser410, Asp411, Gly412, Trp413, Asp414, and Arg415 together coordinate a 1,2-diacyl-sn-glycero-3-phospho-(1D-myo-inositol-3-phosphate). Arg455 contacts a 1,2-diacyl-sn-glycero-3-phospho-(1D-myo-inositol-3-phosphate). The disordered stretch occupies residues 583–609 (DDSCAPYPAPGTSPDEPPLSRLPKTRS). A compositionally biased stretch (pro residues) spans 589-599 (YPAPGTSPDEP). Residues Ser609, Ser629, Ser643, and Ser647 each carry the phosphoserine modification. Residues 693-724 (TKEESGVEEPTHREHTEVPEVKEEAPLAKESR) show a composition bias toward basic and acidic residues. 3 disordered regions span residues 693-731 (TKEESGVEEPTHREHTEVPEVKEEAPLAKESRTAAQGSG), 852-871 (ESGPQLHHRPCLASSGRFSG), and 876-897 (PIAPEPRSAERPQWDSVLHRTS). Residue Thr725 is modified to Phosphothreonine. Ser904 is modified (phosphoserine). Disordered regions lie at residues 932–971 (NKASEQPAGFDTLQKYPTPNGHCANGETGRSKDSLSHQLS) and 988–1017 (KWLNSHSGRPSTTNSPEQPSRSHLDDDGMP). The span at 991 to 1006 (NSHSGRPSTTNSPEQP) shows a compositional bias: polar residues. Positions 1025–1058 (QRLRQIESGHQQEVETLKKQVQELKSRLESQYLT) form a coiled coil. Ser1060 bears the Phosphoserine mark. An FYVE-type zinc finger spans residues 1115–1175 (DHLAAHCYAC…VCKSCYSSLH (61 aa)). The Zn(2+) site is built by Cys1121, Cys1124, Cys1137, Cys1140, Cys1145, Cys1148, Cys1167, and Cys1170.

The protein belongs to the protein-tyrosine phosphatase family. Non-receptor class myotubularin subfamily. In terms of assembly, forms heterodimers with MTMR4 that recruit both CEP55 and PLK1; occurs during early mitosis, regulates the phosphorylation of CEP55 by PLK1 and its recruitment to the midbody where it mediates cell abscission.

Its subcellular location is the cytoplasm. The protein resides in the cytosol. It is found in the membrane. The enzyme catalyses a 1,2-diacyl-sn-glycero-3-phospho-(1D-myo-inositol-3,5-bisphosphate) + H2O = a 1,2-diacyl-sn-glycero-3-phospho-(1D-myo-inositol-5-phosphate) + phosphate. It catalyses the reaction a 1,2-diacyl-sn-glycero-3-phospho-(1D-myo-inositol-3-phosphate) + H2O = a 1,2-diacyl-sn-glycero-3-phospho-(1D-myo-inositol) + phosphate. The catalysed reaction is 1,2-dihexadecanoyl-sn-glycero-3-phospho-(1D-myo-inositol-3-phosphate) + H2O = 1,2-dihexadecanoyl-sn-glycero-3-phospho-(1D-myo-inositol) + phosphate. It carries out the reaction 1,2-dioctanoyl-sn-glycero-3-phospho-(1-D-myo-inositol-3-phosphate) + H2O = 1,2-dioctanoyl-sn-glycero-3-phospho-(1D-myo-inositol) + phosphate. The enzyme catalyses 1,2-dihexadecanoyl-sn-glycero-3-phospho-(1D-myo-inositol-3,5-phosphate) + H2O = 1,2-dihexadecanoyl-sn-glycero-3-phospho-(1D-myo-inositol-5-phosphate) + phosphate. Its function is as follows. Lipid phosphatase that specifically dephosphorylates the D-3 position of phosphatidylinositol 3-phosphate and phosphatidylinositol 3,5-bisphosphate, generating phosphatidylinositol and phosphatidylinositol 5-phosphate. Decreases the levels of phosphatidylinositol 3-phosphate, a phospholipid found in cell membranes where it acts as key regulator of both cell signaling and intracellular membrane traffic. Could also have a molecular sequestering/adapter activity and regulate biological processes independently of its phosphatase activity. It includes the regulation of midbody abscission during mitotic cytokinesis. In Rattus norvegicus (Rat), this protein is Phosphatidylinositol-3,5-bisphosphate 3-phosphatase MTMR3.